Reading from the N-terminus, the 428-residue chain is Immunoglobulin superfamily member 11 (428 aa).

The N-terminal stretch at 1–22 is a signal peptide; sequence MTRRRSAPASWLLVSLLGVATS. Residues 23-136 form the Ig-like V-type domain; that stretch reads LEVSESPGSV…DRGGRNIGVT (114 aa). Residues 23–240 are Extracellular-facing; that stretch reads LEVSESPGSV…QVISPQPRSV (218 aa). Disulfide bonds link cysteine 44–cysteine 120 and cysteine 165–cysteine 215. Asparagine 102 carries an N-linked (GlcNAc...) asparagine glycan. The region spanning 144-234 is the Ig-like C2-type domain; sequence PSAPQCQIQG…TCLLDLQVIS (91 aa). The chain crosses the membrane as a helical span at residues 241 to 261; the sequence is GVIAGAVGTGAVLIVICLALI. Residues 262–428 are Cytoplasmic-facing; sequence SGAFFYWRSK…PAQSRAGSLV (167 aa). Omega-N-methylarginine is present on arginine 375. The segment covering 376–389 has biased composition (polar residues); the sequence is GSSPQVLPRNNGSV. The interval 376–396 is disordered; sequence GSSPQVLPRNNGSVSRKPWPQ.

In terms of processing, N-glycosylated. Highly expressed in testis and detected in kidney and adrenal gland. In brain, expressed in commissure fibers of the corpus callosum and pyramidal cell layers of the dentate gyrus and hippocampus where it is probably expressed by both neurons and glial cells.

It localises to the cell membrane. Functionally, functions as a cell adhesion molecule through homophilic interaction. Stimulates cell growth. This Mus musculus (Mouse) protein is Immunoglobulin superfamily member 11 (Igsf11).